A 328-amino-acid polypeptide reads, in one-letter code: PRFISVGYVDDTELVRFDSDAENPRYEPRARWMEQVEPEYWERNTQIAKDNEQSSRVDLRTLLRYYNQSAGGSHTIQRMYGCDVGSDGRLLRGYEQVAYDGCDYIALNEDLKTWTAADMAALITKHKWEQAGAAERRRAYLEGACVEWLSRHLKNGNATLLRTDSPKAHVTHHSRPEDKVTLRCWALGFYPADITLTWQLNGEELTQDMELVETRPAGDGTFQKWASVVVPLGKEQYYTCHVYHQGLPKPLTLRWEPPPSAVSNTVIIAVLVVLGAAIVTGAVVAFVMMRRRNTGGKGGDYALAPGSQTSDLSLPDCKVMVHDPHSLA.

The interval 1 to 71 (PRFISVGYVD…LLRYYNQSAG (71 aa)) is alpha-1. The Extracellular portion of the chain corresponds to 1-265 (PRFISVGYVD…EPPPSAVSNT (265 aa)). N-linked (GlcNAc...) asparagine glycosylation is present at asparagine 67. The segment at 72–163 (GSHTIQRMYG…KNGNATLLRT (92 aa)) is alpha-2. The cysteines at positions 82 and 145 are disulfide-linked. An N-linked (GlcNAc...) asparagine glycan is attached at asparagine 157. Residues 164–255 (DSPKAHVTHH…GLPKPLTLRW (92 aa)) form an alpha-3 region. The region spanning 166 to 252 (PKAHVTHHSR…YHQGLPKPLT (87 aa)) is the Ig-like C1-type domain. Residues cysteine 184 and cysteine 240 are joined by a disulfide bond. Residues 256-265 (EPPPSAVSNT) are connecting peptide. A helical transmembrane segment spans residues 266–289 (VIIAVLVVLGAAIVTGAVVAFVMM). Residues 290–328 (RRRNTGGKGGDYALAPGSQTSDLSLPDCKVMVHDPHSLA) lie on the Cytoplasmic side of the membrane. Serine 310 and serine 313 each carry phosphoserine.

This sequence belongs to the MHC class I family. Heterodimer of an alpha chain and a beta chain (beta-2-microglobulin).

Its subcellular location is the membrane. In terms of biological role, involved in the presentation of foreign antigens to the immune system. This Mus musculus (Mouse) protein is H-2 class I histocompatibility antigen, K-Q alpha chain (H2-K1).